The chain runs to 74 residues: Small ribosomal subunit protein bS18 (74 aa).

It belongs to the bacterial ribosomal protein bS18 family. In terms of assembly, part of the 30S ribosomal subunit. Forms a tight heterodimer with protein bS6.

In terms of biological role, binds as a heterodimer with protein bS6 to the central domain of the 16S rRNA, where it helps stabilize the platform of the 30S subunit. In Alkalilimnicola ehrlichii (strain ATCC BAA-1101 / DSM 17681 / MLHE-1), this protein is Small ribosomal subunit protein bS18.